The chain runs to 434 residues: GTPase Obg (434 aa).

The 159-residue stretch at 1 to 159 (MQFIDRCQIK…KTVRLELKYL (159 aa)) folds into the Obg domain. The OBG-type G domain maps to 160 to 329 (ANVGIVGYPN…LVDRVFDLYQ (170 aa)). GTP contacts are provided by residues 166-173 (GYPNAGKS), 191-195 (FTTLV), 212-215 (DIPG), 282-285 (NKMD), and 310-312 (ISA). Mg(2+) is bound by residues Ser-173 and Thr-193. The region spanning 356–434 (EKTIDDDPLD…ICDYEYLIDE (79 aa)) is the OCT domain.

The protein belongs to the TRAFAC class OBG-HflX-like GTPase superfamily. OBG GTPase family. Monomer. Mg(2+) is required as a cofactor.

Its subcellular location is the cytoplasm. Its function is as follows. An essential GTPase which binds GTP, GDP and possibly (p)ppGpp with moderate affinity, with high nucleotide exchange rates and a fairly low GTP hydrolysis rate. Plays a role in control of the cell cycle, stress response, ribosome biogenesis and in those bacteria that undergo differentiation, in morphogenesis control. The chain is GTPase Obg from Mycoplasmoides gallisepticum (strain R(low / passage 15 / clone 2)) (Mycoplasma gallisepticum).